The chain runs to 682 residues: Potassium-transporting ATPase ATP-binding subunit (682 aa).

4 consecutive transmembrane segments (helical) span residues 34 to 54, 62 to 82, 219 to 239, and 254 to 274; these read PVMF…IAMA, ALFS…ANFA, IALT…TATL, and VLVA…LSAI. The active-site 4-aspartylphosphate intermediate is Asp307. Residues Asp344, Glu348, 377-384, and Lys395 contribute to the ATP site; that span reads FTAQSRMS. 2 residues coordinate Mg(2+): Asp518 and Asp522. Helical transmembrane passes span 588 to 608, 616 to 636, and 662 to 682; these read FAII…LNIM, AILS…PLAL, and LLVP…CGLV.

Belongs to the cation transport ATPase (P-type) (TC 3.A.3) family. Type IA subfamily. In terms of assembly, the system is composed of three essential subunits: KdpA, KdpB and KdpC.

It is found in the cell inner membrane. It carries out the reaction K(+)(out) + ATP + H2O = K(+)(in) + ADP + phosphate + H(+). Functionally, part of the high-affinity ATP-driven potassium transport (or Kdp) system, which catalyzes the hydrolysis of ATP coupled with the electrogenic transport of potassium into the cytoplasm. This subunit is responsible for energy coupling to the transport system and for the release of the potassium ions to the cytoplasm. This is Potassium-transporting ATPase ATP-binding subunit from Escherichia coli O81 (strain ED1a).